The following is a 174-amino-acid chain: Methionine-R-sulfoxide reductase B2, mitochondrial (174 aa).

Residues 1-61 (MARLLRALRG…PEQFYVTREK (61 aa)) constitute a mitochondrion transit peptide. Positions 62–172 (GTEAPFSGMY…NSVALKFKPS (111 aa)) constitute a MsrB domain. Zn(2+)-binding residues include Cys82, Cys85, Cys138, and Cys141. Catalysis depends on Cys161, which acts as the Nucleophile.

It belongs to the MsrB Met sulfoxide reductase family. It depends on Zn(2+) as a cofactor.

The protein localises to the mitochondrion. It catalyses the reaction L-methionyl-[protein] + [thioredoxin]-disulfide + H2O = L-methionyl-(R)-S-oxide-[protein] + [thioredoxin]-dithiol. The enzyme catalyses [thioredoxin]-disulfide + L-methionine + H2O = L-methionine (R)-S-oxide + [thioredoxin]-dithiol. Functionally, methionine-sulfoxide reductase that specifically reduces methionine (R)-sulfoxide back to methionine. While in many cases, methionine oxidation is the result of random oxidation following oxidative stress, methionine oxidation is also a post-translational modification that takes place on specific residue. Upon oxidative stress, may play a role in the preservation of mitochondrial integrity by decreasing the intracellular reactive oxygen species build-up through its scavenging role, hence contributing to cell survival and protein maintenance. The protein is Methionine-R-sulfoxide reductase B2, mitochondrial (Msrb2) of Rattus norvegicus (Rat).